The following is a 467-amino-acid chain: Ribulose bisphosphate carboxylase large chain (467 aa).

A propeptide spanning residues 1 to 2 (MS) is cleaved from the precursor. The residue at position 3 (P3) is an N-acetylproline. K14 is subject to N6,N6,N6-trimethyllysine. Positions 123 and 173 each coordinate substrate. The Proton acceptor role is filled by K175. Residue K177 participates in substrate binding. K201, D203, and E204 together coordinate Mg(2+). K201 bears the N6-carboxylysine mark. H294 functions as the Proton acceptor in the catalytic mechanism. R295, H327, and S379 together coordinate substrate.

The protein belongs to the RuBisCO large chain family. Type I subfamily. Heterohexadecamer of 8 large chains and 8 small chains; disulfide-linked. The disulfide link is formed within the large subunit homodimers. Mg(2+) serves as cofactor. In terms of processing, the disulfide bond which can form in the large chain dimeric partners within the hexadecamer appears to be associated with oxidative stress and protein turnover.

It is found in the plastid. It localises to the chloroplast. It carries out the reaction 2 (2R)-3-phosphoglycerate + 2 H(+) = D-ribulose 1,5-bisphosphate + CO2 + H2O. It catalyses the reaction D-ribulose 1,5-bisphosphate + O2 = 2-phosphoglycolate + (2R)-3-phosphoglycerate + 2 H(+). In terms of biological role, ruBisCO catalyzes two reactions: the carboxylation of D-ribulose 1,5-bisphosphate, the primary event in carbon dioxide fixation, as well as the oxidative fragmentation of the pentose substrate in the photorespiration process. Both reactions occur simultaneously and in competition at the same active site. This chain is Ribulose bisphosphate carboxylase large chain, found in Serenoa repens (Saw palmetto).